A 241-amino-acid polypeptide reads, in one-letter code: Small ribosomal subunit protein uS10m (241 aa).

The N-terminal 54 residues, 1–54 (MIAGVLRRSSLPSRQTLSAALASFNSCISHNLTPATTGASVSSRFTLASSPNSF), are a transit peptide targeting the mitochondrion.

It belongs to the universal ribosomal protein uS10 family. Component of the mitochondrial ribosome small subunit.

Its subcellular location is the mitochondrion. This chain is Small ribosomal subunit protein uS10m (RPS10), found in Arabidopsis thaliana (Mouse-ear cress).